Reading from the N-terminus, the 168-residue chain is Peptidyl-Lys metalloendopeptidase (168 aa).

2 disulfides stabilise this stretch: C6–C76 and C78–C98. Zn(2+) is bound at residue H118. E119 is a catalytic residue. Positions 122 and 131 each coordinate Zn(2+).

Zn(2+) is required as a cofactor.

It localises to the secreted. The enzyme catalyses Preferential cleavage in proteins: -Xaa-|-Lys- (in which Xaa may be Pro).. Its activity is regulated as follows. Inhibited by chelating agents such as EDTA and 1,10-phenanthroline. This chain is Peptidyl-Lys metalloendopeptidase (MEP), found in Pleurotus ostreatus (Oyster mushroom).